The following is a 127-amino-acid chain: uncharacterized protein (127 aa).

Transmembrane regions (helical) follow at residues 13-35 (ILLL…GIIF) and 57-81 (AVLI…IMIW).

The protein resides in the cell membrane. This is an uncharacterized protein from Mycoplasma genitalium (strain ATCC 33530 / DSM 19775 / NCTC 10195 / G37) (Mycoplasmoides genitalium).